The chain runs to 345 residues: Annexin A9 (345 aa).

Annexin repeat units lie at residues 41 to 112 (FSVD…ALLQ), 113 to 184 (PAAQ…ALSK), 197 to 266 (NLEE…SLAS), and 270 to 341 (NTAL…ALCR).

It belongs to the annexin family. In terms of assembly, homodimer.

Functionally, may act as a low affinity receptor for acetylcholine. In Mus musculus (Mouse), this protein is Annexin A9 (Anxa9).